The following is a 620-amino-acid chain: Chaperone protein HscA homolog (620 aa).

This sequence belongs to the heat shock protein 70 family.

Chaperone involved in the maturation of iron-sulfur cluster-containing proteins. Has a low intrinsic ATPase activity which is markedly stimulated by HscB. This is Chaperone protein HscA homolog from Colwellia psychrerythraea (strain 34H / ATCC BAA-681) (Vibrio psychroerythus).